The sequence spans 181 residues: Major urinary protein (181 aa).

The signal sequence occupies residues 1-19 (MKLLLLLLCLGLTLVCGHA). Residue asparagine 54 is glycosylated (N-linked (GlcNAc...) asparagine). An intrachain disulfide couples cysteine 83 to cysteine 176.

Belongs to the calycin superfamily. Lipocalin family. Abundant in the urine of adult male rats but absent from that of females.

The protein localises to the cytoplasm. It is found in the cytosol. Its subcellular location is the secreted. Major urinary proteins (Mups) bind and release pheromones. They may also protect pheromones from oxidation. In this context, they play a role in the regulation of social behaviors, such as aggression, mating, pup-suckling, territory establishment and dominance. Acts as a kairomone, detected by the prey vomeronasal organ and inducing fear reactions in mice. This Rattus norvegicus (Rat) protein is Major urinary protein.